Here is a 273-residue protein sequence, read N- to C-terminus: MAYQQEITQIGSNFQLDETNLEIDENKYSSRKLCFLIKRYIKDFYGYIYIPYDYFKRDDWDIHKTLNDNEDMLFYNQEFVDKNDKDRFYEVFDKFTELLGEIFSIDGNLCNCLYNFPSVRELKINKNSTESFLFALFNSRKYYYISPAYKLQLYYKYSDKCDGEELVEKILEKLNTIVSLVKKEMKNFTDIYENIITSYVYEKPFEEEKQNSYVKGFVNSILLEIIELSDKLIKLHVYGIHTLINEVIEYYLPMDEYNNFDSEQHDGRKLVIV.

This is an uncharacterized protein from Acanthamoeba polyphaga mimivirus (APMV).